Consider the following 669-residue polypeptide: Translation factor GUF1, mitochondrial (669 aa).

A mitochondrion-targeting transit peptide spans Met1–Tyr49. A tr-type G domain is found at Glu66–Lys247. Residues Ala75–Ser82, Asp140–His144, and Asn194–Asp197 contribute to the GTP site.

Belongs to the TRAFAC class translation factor GTPase superfamily. Classic translation factor GTPase family. LepA subfamily.

Its subcellular location is the mitochondrion inner membrane. The enzyme catalyses GTP + H2O = GDP + phosphate + H(+). In terms of biological role, promotes mitochondrial protein synthesis. May act as a fidelity factor of the translation reaction, by catalyzing a one-codon backward translocation of tRNAs on improperly translocated ribosomes. Binds to mitochondrial ribosomes in a GTP-dependent manner. The protein is Translation factor GUF1, mitochondrial of Bos taurus (Bovine).